A 1039-amino-acid chain; its full sequence is Probable inorganic carbon transporter subunit DabA 2 (1039 aa).

Zn(2+) is bound by residues C462, D464, H721, and C736.

Belongs to the inorganic carbon transporter (TC 9.A.2) DabA family. As to quaternary structure, forms a complex with DabB. Zn(2+) is required as a cofactor.

The protein resides in the cell inner membrane. Part of an energy-coupled inorganic carbon pump. This is Probable inorganic carbon transporter subunit DabA 2 from Nitrobacter hamburgensis (strain DSM 10229 / NCIMB 13809 / X14).